The chain runs to 130 residues: Putative pre-16S rRNA nuclease (130 aa).

This sequence belongs to the YqgF nuclease family.

It localises to the cytoplasm. Functionally, could be a nuclease involved in processing of the 5'-end of pre-16S rRNA. The polypeptide is Putative pre-16S rRNA nuclease (Buchnera aphidicola subsp. Cinara cedri (strain Cc)).